A 961-amino-acid chain; its full sequence is MLAPRGATFLLLHLALQPWLGAGAQATPQVFDLLPSASQRLNPSVLQPILTDPTLNELYVISTFKLQSKSSATIFGLYSSADHSKYFEFTVMGRLNKAILRYLKNDGRIHLVVFNNLQLADGRRHRLLLRLTNLHRGAGSVELFLDCTRVDSIHNLPRAFSGLAQSPEAVELRTFQRKAHDSLEELKLVVRGSLIQVASLQDCFLQQSEPLATTNTGDFNRQFLGQMSQLNQLLGEVKDLLRQQVKETSFLRNTIAECQACGPLSFQSPTPNTLMPVVPAASPTPPVRRCDSNPCFRGVRCTDTRDGFQCGPCPEGYTGNGIVCSDVDECRYHPCYPGVRCVNLAPGFRCDACPVGFTGPMMQGVGISFAKTNKQVCTDIDECRNGACVLNSICINTLGSYRCGPCKPGYIGDQMRGCKMERNCRDPELNPCSVNAQCIEERQGDVTCVCGVGWAGDGYICGKDVDIDSYPDEELPCSARNCKKDNCKYVPNSGQEDADRDGIGDACDDDADGDGILNEQDNCVLTHNVDQRNSDKDIFGDACDNCRNVLNNDQKDTDGDGKGDACDDDMDGDGIKNILDNCQKVPNSDQEDRDGDGVGDACDSCPEVSNPNQSDVDNDLVGDSCDTNQDSDGDGHQDSTDNCPTVINSAQLDTDKDGIGDECDDDDDNDGIPDLVPPGPDNCRLVPNPAQEDSNSDGVGDICEADFDQDQVIDRIDVCPENAEVTLTDFRAYQTVVLDPEGDAQIDPNWVVLNQGMEIVQTMNSDPGLAVGYTAFNGVDFEGTFHVNTQTDDDYAGFIFGYQDSSSFYVVMWKQTEQTYWQATPFRAVAEPGIQLKAVKSKTGPGEHLRNSLWHTGDTSDQVRLLWKDSRNVGWKDKVSYRWFLQHRPQVGYIRVRFYEGSELVADSGVTIDTTMRGGRLGVFCFSQENIIWSNLKYRCNDTIPEDFQEFQTQNFDRLDK.

Residues 1-23 (MLAPRGATFLLLHLALQPWLGAG) form the signal peptide. In terms of domain architecture, Laminin G-like spans 24-192 (AQATPQVFDL…LEELKLVVRG (169 aa)). In terms of domain architecture, EGF-like 1 spans 286–325 (PVRRCDSNPCFRGVRCTDTRDGFQCGPCPEGYTGNGIVCS). Disulfide bonds link cysteine 290–cysteine 301, cysteine 295–cysteine 310, cysteine 313–cysteine 324, cysteine 330–cysteine 341, cysteine 335–cysteine 350, cysteine 353–cysteine 377, cysteine 383–cysteine 394, cysteine 388–cysteine 403, cysteine 406–cysteine 418, cysteine 424–cysteine 438, cysteine 432–cysteine 448, cysteine 450–cysteine 461, cysteine 477–cysteine 482, cysteine 487–cysteine 507, cysteine 523–cysteine 543, cysteine 546–cysteine 566, cysteine 582–cysteine 602, cysteine 605–cysteine 625, cysteine 643–cysteine 663, cysteine 683–cysteine 703, and cysteine 719–cysteine 940. The region spanning 326–363 (DVDECRYHPCYPGVRCVNLAPGFRCDACPVGFTGPMMQ) is the EGF-like 2; calcium-binding domain. Residues 379 to 419 (DIDECRNGACVLNSICINTLGSYRCGPCKPGYIGDQMRGCK) enclose the EGF-like 3; calcium-binding domain. Residues 420-462 (MERNCRDPELNPCSVNAQCIEERQGDVTCVCGVGWAGDGYICG) enclose the EGF-like 4 domain. TSP type-3 repeat units lie at residues 463-495 (KDVD…NSGQ), 496-531 (EDAD…NVDQ), 532-554 (RNSD…NNDQ), 555-590 (KDTD…NSDQ), 591-613 (EDRD…NPNQ), 614-651 (SDVD…NSAQ), 652-691 (LDTD…NPAQ), and 692-727 (EDSN…EVTL). Positions 562–564 (KGD) match the Cell attachment site motif. Positions 581-671 (NCQKVPNSDQ…ECDDDDDNDG (91 aa)) are disordered. An N-linked (GlcNAc...) asparagine glycan is attached at asparagine 612. Over residues 640–652 (TDNCPTVINSAQL) the composition is skewed to polar residues. Residues 660 to 671 (GDECDDDDDNDG) show a composition bias toward acidic residues. The region spanning 731-945 (RAYQTVVLDP…LKYRCNDTIP (215 aa)) is the TSP C-terminal domain. The N-linked (GlcNAc...) asparagine glycan is linked to asparagine 941.

Belongs to the thrombospondin family. In terms of assembly, homopentamer; disulfide-linked. Interacts with PTBP3. Interacts (via EGF-like 3; calcium-binding domain) with ATF6 and facilitates its processing, activation and nuclear translocation. Interacts with NOTCH1.

It localises to the endoplasmic reticulum. It is found in the sarcoplasmic reticulum. The protein resides in the secreted. The protein localises to the extracellular space. Its subcellular location is the extracellular matrix. In terms of biological role, adhesive glycoprotein that mediates cell-to-cell and cell-to-matrix interactions and is involved in various processes including cellular proliferation, migration, adhesion and attachment, inflammatory response to CNS injury, regulation of vascular inflammation and adaptive responses of the heart to pressure overload and in myocardial function and remodeling. Binds to structural extracellular matrix (ECM) proteins and modulates the ECM in response to tissue damage, contributing to cardioprotective and adaptive ECM remodeling. Plays a role in ER stress response, via its interaction with the activating transcription factor 6 alpha (ATF6) which produces adaptive ER stress response factors and protects myocardium from pressure overload. May contribute to spinal presynaptic hypersensitivity and neuropathic pain states after peripheral nerve injury. May play a role in regulating protective astrogenesis from the subventricular zone (SVZ) niche after injury in a NOTCH1-dependent manner. The chain is Thrombospondin-4 (THBS4) from Bos taurus (Bovine).